A 257-amino-acid polypeptide reads, in one-letter code: MSKEPLDEIQWKNPEWIQQFGLFTGNVLDYFSESPFYDRTSNNQVLRMQFQFQQIPPNINPQKYLQSKLVEMTGIEFIIAASREPDFWIIRKQTRLSPKQVNIEQDYYIIGANIYQAPKVYDILSSRLLSSVLSIKGSMELLNKMSKFNIHDMGHSYPTLQAEKEISSSSNTIPNTVSVNTTTPMLHTPATASNINSNGHSSTNLGLNNEISNLAFDNLLNNVINSSNDDTYLEDIPLYGKGSTVESLGVKVNLDDV.

Belongs to the Mediator complex subunit 6 family. Component of the Mediator complex.

The protein localises to the nucleus. Its function is as follows. Component of the Mediator complex, a coactivator involved in the regulated transcription of nearly all RNA polymerase II-dependent genes. Mediator functions as a bridge to convey information from gene-specific regulatory proteins to the basal RNA polymerase II transcription machinery. Mediator is recruited to promoters by direct interactions with regulatory proteins and serves as a scaffold for the assembly of a functional preinitiation complex with RNA polymerase II and the general transcription factors. This is Mediator of RNA polymerase II transcription subunit 6 (MED6) from Debaryomyces hansenii (strain ATCC 36239 / CBS 767 / BCRC 21394 / JCM 1990 / NBRC 0083 / IGC 2968) (Yeast).